A 255-amino-acid polypeptide reads, in one-letter code: Small ribosomal subunit protein uS2 (255 aa).

Belongs to the universal ribosomal protein uS2 family.

The chain is Small ribosomal subunit protein uS2 from Streptococcus thermophilus (strain CNRZ 1066).